Reading from the N-terminus, the 179-residue chain is Large ribosomal subunit protein uL5 (179 aa).

Belongs to the universal ribosomal protein uL5 family. As to quaternary structure, part of the 50S ribosomal subunit; part of the 5S rRNA/L5/L18/L25 subcomplex. Contacts the 5S rRNA and the P site tRNA. Forms a bridge to the 30S subunit in the 70S ribosome.

In terms of biological role, this is one of the proteins that bind and probably mediate the attachment of the 5S RNA into the large ribosomal subunit, where it forms part of the central protuberance. In the 70S ribosome it contacts protein S13 of the 30S subunit (bridge B1b), connecting the 2 subunits; this bridge is implicated in subunit movement. Contacts the P site tRNA; the 5S rRNA and some of its associated proteins might help stabilize positioning of ribosome-bound tRNAs. The chain is Large ribosomal subunit protein uL5 from Serratia proteamaculans (strain 568).